Here is a 195-residue protein sequence, read N- to C-terminus: MPPTFVLASASPARKRLLEMAGISPLVAVSHFDESSLAADNTVALVEALAKAKAGTVASKFADALVLGCDSLLLVNGQTYGKPESPAVAIARWQTMRGQVGELYTGHALIDRTQNRCLCQTGLTKVHFADVDDDTIQAYVGSGEPLQCAGAFALEGKGGMLINKLDGCSSNVIGLSLPILRSLLQRLGYSLKDFW.

Aspartate 70 (proton acceptor) is an active-site residue.

It belongs to the Maf family. It depends on a divalent metal cation as a cofactor.

Its subcellular location is the cytoplasm. The enzyme catalyses a ribonucleoside 5'-triphosphate + H2O = a ribonucleoside 5'-phosphate + diphosphate + H(+). It catalyses the reaction a 2'-deoxyribonucleoside 5'-triphosphate + H2O = a 2'-deoxyribonucleoside 5'-phosphate + diphosphate + H(+). In terms of biological role, nucleoside triphosphate pyrophosphatase. May have a dual role in cell division arrest and in preventing the incorporation of modified nucleotides into cellular nucleic acids. This chain is Nucleoside triphosphate pyrophosphatase, found in Synechocystis sp. (strain ATCC 27184 / PCC 6803 / Kazusa).